We begin with the raw amino-acid sequence, 766 residues long: Single-minded homolog 1 (766 aa).

Residues 1-53 enclose the bHLH domain; that stretch reads MKEKSKNAARTRREKENSEFYELAKLLPLPSAITSQLDKASIIRLTTSYLKMR. 2 PAS domains span residues 77–147 and 218–288; these read GREL…QPYH and PPSA…LVKG. In terms of domain architecture, PAC spans 292-335; that stretch reads TKYYRFLAKHGGWVWVQSYATIVHNSRSSRPHCIVSVNYVLTDT. In terms of domain architecture, Single-minded C-terminal spans 336–766; the sequence is EYKGLQLSLD…GTSVIITNGS (431 aa). Over residues 353–365 the composition is skewed to polar residues; that stretch reads AFSYTSSSTPTMT. Disordered regions lie at residues 353–431 and 528–563; these read AFSY…SQHD and WDED…EPSK. The Nuclear localization signal signature appears at 368–387; it reads RKGAKSRLSSSKSKSRTSPY. A compositionally biased stretch (low complexity) spans 373-385; that stretch reads SRLSSSKSKSRTS. Positions 394–404 are enriched in basic and acidic residues; sequence HTERSESDHDS.

In terms of assembly, efficient DNA binding requires dimerization with another bHLH protein. Heterodimer; forms a heterodimer with ARNT, ARNT2.

Its subcellular location is the nucleus. Transcriptional factor that may have pleiotropic effects during embryogenesis and in the adult. In Pan paniscus (Pygmy chimpanzee), this protein is Single-minded homolog 1 (SIM1).